We begin with the raw amino-acid sequence, 88 residues long: MANIKSAKKRIKVIETKTLRNKMIKSALKTKIKNFEVAVANNDLNEAKSAYTIVVKALDMAAAKGILHKNKAARKKSRLATKLSGLNA.

Belongs to the bacterial ribosomal protein bS20 family.

In terms of biological role, binds directly to 16S ribosomal RNA. The protein is Small ribosomal subunit protein bS20 of Clostridium novyi (strain NT).